The following is a 200-amino-acid chain: dTTP/UTP pyrophosphatase (200 aa).

Asp80 acts as the Proton acceptor in catalysis.

Belongs to the Maf family. YhdE subfamily. The cofactor is a divalent metal cation.

Its subcellular location is the cytoplasm. It catalyses the reaction dTTP + H2O = dTMP + diphosphate + H(+). The catalysed reaction is UTP + H2O = UMP + diphosphate + H(+). In terms of biological role, nucleoside triphosphate pyrophosphatase that hydrolyzes dTTP and UTP. May have a dual role in cell division arrest and in preventing the incorporation of modified nucleotides into cellular nucleic acids. This chain is dTTP/UTP pyrophosphatase, found in Pasteurella multocida (strain Pm70).